Here is a 372-residue protein sequence, read N- to C-terminus: Delta-type opioid receptor (372 aa).

Topologically, residues 1–47 (MEPAPSAGAELQPPLFANASDAYPSACPSAGANASGPPGARSASSLA) are extracellular. N-linked (GlcNAc...) asparagine glycans are attached at residues Asn18 and Asn33. The chain crosses the membrane as a helical span at residues 48 to 75 (LAIAITALYSAVCAVGLLGNVLVMFGIV). The Cytoplasmic segment spans residues 76-85 (RYTKMKTATN). The helical transmembrane segment at 86–110 (IYIFNLALADALATSTLPFQSAKYL) threads the bilayer. Over 111-122 (METWPFGELLCK) the chain is Extracellular. The cysteines at positions 121 and 198 are disulfide-linked. Residues 123-144 (AVLSIDYYNMFTSIFTLTMMSV) form a helical membrane-spanning segment. Residues 145–163 (DRYIAVCHPVKALDFRTPA) are Cytoplasmic-facing. The chain crosses the membrane as a helical span at residues 164 to 186 (KAKLINICIWVLASGVGVPIMVM). The Extracellular portion of the chain corresponds to 187–206 (AVTRPRDGAVVCMLQFPSPS). Residues 207-238 (WYWDTVTKICVFLFAFVVPILIITVCYGLMLL) form a helical membrane-spanning segment. The Cytoplasmic segment spans residues 239-261 (RLRSVRLLSGSKEKDRSLRRITR). The helical transmembrane segment at 262 to 284 (MVLVVVGAFVVCWAPIHIFVIVW) threads the bilayer. The Extracellular segment spans residues 285–299 (TLVDIDRRDPLVVAA). The helical transmembrane segment at 300 to 321 (LHLCIALGYANSSLNPVLYAFL) threads the bilayer. Topologically, residues 322 to 372 (DENFKRCFRQLCRKPCGRPDPSSFSRAREATARERVTACTPSDGPGGGAAA) are cytoplasmic. The S-palmitoyl cysteine moiety is linked to residue Cys333. The disordered stretch occupies residues 340 to 372 (PDPSSFSRAREATARERVTACTPSDGPGGGAAA). Residues 347-357 (RAREATARERV) are compositionally biased toward basic and acidic residues.

This sequence belongs to the G-protein coupled receptor 1 family. May form homooligomers. Forms a heterodimer with OPRM1. Interacts with GPRASP1. Interacts with RTP4; the interaction promotes cell surface localization of the OPRD1-OPRM1 heterodimer. N-glycosylated. Post-translationally, ubiquitinated. A basal ubiquitination seems not to be related to degradation. Ubiquitination is increased upon formation of OPRM1:OPRD1 oligomers leading to proteasomal degradation; the ubiquitination is diminished by RTP4. In terms of tissue distribution, detected in oocytes (at protein level). Detected in brain cortex, hypothalamus, hippocampus and olfactory bulb. Detected in oocytes.

The protein resides in the cell membrane. G-protein coupled receptor that functions as a receptor for endogenous enkephalins and for a subset of other opioids. Ligand binding causes a conformation change that triggers signaling via guanine nucleotide-binding proteins (G proteins) and modulates the activity of down-stream effectors, such as adenylate cyclase. Signaling leads to the inhibition of adenylate cyclase activity. Inhibits neurotransmitter release by reducing calcium ion currents and increasing potassium ion conductance. Plays a role in the perception of pain and in opiate-mediated analgesia. Plays a role in developing analgesic tolerance to morphine. This Homo sapiens (Human) protein is Delta-type opioid receptor (OPRD1).